The primary structure comprises 671 residues: Acetyl-coenzyme A synthetase 1 (671 aa).

Residues 210-213 and T329 contribute to the CoA site; that span reads RGGK. ATP is bound by residues 405–407, 429–434, D520, and R535; these read GEP and DTYWQT. S543 serves as a coordination point for CoA. R546 lines the ATP pocket. CoA is bound at residue R605.

Belongs to the ATP-dependent AMP-binding enzyme family.

The enzyme catalyses acetate + ATP + CoA = acetyl-CoA + AMP + diphosphate. The sequence is that of Acetyl-coenzyme A synthetase 1 (ACS1) from Debaryomyces hansenii (strain ATCC 36239 / CBS 767 / BCRC 21394 / JCM 1990 / NBRC 0083 / IGC 2968) (Yeast).